Consider the following 503-residue polypeptide: Probable cytosol aminopeptidase (503 aa).

2 residues coordinate Mn(2+): Lys-271 and Asp-276. Residue Lys-283 is part of the active site. Mn(2+)-binding residues include Asp-294, Asp-353, and Glu-355. Arg-357 is a catalytic residue.

It belongs to the peptidase M17 family. Requires Mn(2+) as cofactor.

It is found in the cytoplasm. The catalysed reaction is Release of an N-terminal amino acid, Xaa-|-Yaa-, in which Xaa is preferably Leu, but may be other amino acids including Pro although not Arg or Lys, and Yaa may be Pro. Amino acid amides and methyl esters are also readily hydrolyzed, but rates on arylamides are exceedingly low.. The enzyme catalyses Release of an N-terminal amino acid, preferentially leucine, but not glutamic or aspartic acids.. Presumably involved in the processing and regular turnover of intracellular proteins. Catalyzes the removal of unsubstituted N-terminal amino acids from various peptides. The sequence is that of Probable cytosol aminopeptidase from Chlorobium phaeobacteroides (strain DSM 266 / SMG 266 / 2430).